Consider the following 475-residue polypeptide: ATP synthase subunit beta, chloroplastic (475 aa).

155-162 contacts ATP; it reads GGAGVGKT.

Belongs to the ATPase alpha/beta chains family. F-type ATPases have 2 components, CF(1) - the catalytic core - and CF(0) - the membrane proton channel. CF(1) has five subunits: alpha(3), beta(3), gamma(1), delta(1), epsilon(1). CF(0) has four main subunits: a(1), b(1), b'(1) and c(9-12).

Its subcellular location is the plastid. It localises to the chloroplast thylakoid membrane. It carries out the reaction ATP + H2O + 4 H(+)(in) = ADP + phosphate + 5 H(+)(out). Its function is as follows. Produces ATP from ADP in the presence of a proton gradient across the membrane. The catalytic sites are hosted primarily by the beta subunits. This is ATP synthase subunit beta, chloroplastic from Porphyra purpurea (Red seaweed).